Reading from the N-terminus, the 531-residue chain is UDP-glucuronosyltransferase 1A6 (531 aa).

Residues 1 to 26 (MACLLSAAQRASAGVLFVALWGTVLG) form the signal peptide. The N-linked (GlcNAc...) asparagine glycan is linked to N294. The helical transmembrane segment at 489 to 505 (VIGFLLAIVLTVAFVTF) threads the bilayer.

This sequence belongs to the UDP-glycosyltransferase family.

It is found in the microsome. The protein resides in the endoplasmic reticulum membrane. The catalysed reaction is glucuronate acceptor + UDP-alpha-D-glucuronate = acceptor beta-D-glucuronoside + UDP + H(+). It carries out the reaction (5Z,8Z,11Z,14Z)-eicosatetraenoate + UDP-alpha-D-glucuronate = O-[(5Z),(8Z),(11Z),(14Z)-eicosatetraenoyl]-beta-D-glucuronate + UDP. The enzyme catalyses 15-hydroxy-(5Z,8Z,11Z,13E)-eicosatetraenoate + UDP-alpha-D-glucuronate = 15-O-(beta-D-glucuronosyl)-(5Z,8Z,11Z,14Z)-eicosatetraenoate + UDP + H(+). It catalyses the reaction (E)-ferulate + UDP-alpha-D-glucuronate = (E)-4-O-(beta-D-glucuronosyl)-ferulate + UDP + H(+). The catalysed reaction is (E)-ferulate + UDP-alpha-D-glucuronate = (E)-ferulic acid beta-D-glucuronate ester + UDP. Functionally, UDP-glucuronosyltransferase (UGT) that catalyzes phase II biotransformation reactions in which lipophilic substrates are conjugated with glucuronic acid to facilitate their inactivation and excretion from the body. Essential for the elimination and detoxification of drugs, xenobiotics and endogenous compounds. Involved in the glucuronidation of arachidonic acid (AA) and AA-derived eicosanoids including 15-HETE and 20-HETE. Conjugates small planar phenolic molecules such as 4-nitrophenol, 1-naphthol, and 4-methylumbelliferone. The bulky phenol 4-hydroxybiphenyl, androgens and estrogens are not substrates. 2-hydroxybiphenyl is an excellent substrate. Involved in the glucuronidation of the phytochemical ferulic acid at the phenolic or the carboxylic acid group. The sequence is that of UDP-glucuronosyltransferase 1A6 (UGT1) from Oryctolagus cuniculus (Rabbit).